A 252-amino-acid polypeptide reads, in one-letter code: Imidazole glycerol phosphate synthase subunit HisF (252 aa).

Catalysis depends on residues Asp-11 and Asp-130.

Belongs to the HisA/HisF family. As to quaternary structure, heterodimer of HisH and HisF.

It is found in the cytoplasm. It catalyses the reaction 5-[(5-phospho-1-deoxy-D-ribulos-1-ylimino)methylamino]-1-(5-phospho-beta-D-ribosyl)imidazole-4-carboxamide + L-glutamine = D-erythro-1-(imidazol-4-yl)glycerol 3-phosphate + 5-amino-1-(5-phospho-beta-D-ribosyl)imidazole-4-carboxamide + L-glutamate + H(+). The protein operates within amino-acid biosynthesis; L-histidine biosynthesis; L-histidine from 5-phospho-alpha-D-ribose 1-diphosphate: step 5/9. IGPS catalyzes the conversion of PRFAR and glutamine to IGP, AICAR and glutamate. The HisF subunit catalyzes the cyclization activity that produces IGP and AICAR from PRFAR using the ammonia provided by the HisH subunit. This Dictyoglomus turgidum (strain DSM 6724 / Z-1310) protein is Imidazole glycerol phosphate synthase subunit HisF.